A 346-amino-acid polypeptide reads, in one-letter code: fMet-Leu-Phe receptor (346 aa).

Residues N1 and N7 are each glycosylated (N-linked (GlcNAc...) asparagine). At 1–24 the chain is on the extracellular side; it reads NSSLPTNISGGTPAVSAGYLFLDI. Residues 25–47 traverse the membrane as a helical segment; that stretch reads ITYLVFAVTFVLGVLGNGLVIWV. Residues 48–58 lie on the Cytoplasmic side of the membrane; sequence AGFRMTHTVTT. Residues 59–80 form a helical membrane-spanning segment; it reads ISYLNLAVADFCFTSTLPFFMV. Topologically, residues 81–97 are extracellular; that stretch reads RKAMGGHWPFGWFLCKF. An intrachain disulfide couples C95 to C173. The chain crosses the membrane as a helical span at residues 98-118; that stretch reads IFTIVDINLFGSVFLIALIAL. Topologically, residues 119–137 are cytoplasmic; sequence DRCVCVLHPVWTQNHRTVS. Residues 138 to 159 form a helical membrane-spanning segment; that stretch reads LAKKVIIGPWVMALLLTLPVII. Topologically, residues 160-202 are extracellular; that stretch reads RVTTVPGKTGTVACTFNFSPWTNDPKERINVAIAMLTVRGIIR. The chain crosses the membrane as a helical span at residues 203–223; it reads FIIGFSAPMSIVAVSYGLIAT. The Cytoplasmic portion of the chain corresponds to 224 to 239; it reads KIHKQGLIKFSRPLRV. The helical transmembrane segment at 240-263 threads the bilayer; it reads LSFVAAAFFLCWSPYQVVALIATV. The Extracellular portion of the chain corresponds to 264-282; sequence RIRELLQGMYKEIGIAVDV. The helical transmembrane segment at 283–302 threads the bilayer; the sequence is TSALAFFNSCLNPMLYVFMG. The Cytoplasmic portion of the chain corresponds to 303–346; the sequence is QDFRERLIHALPASLERALTEDSTQTSDTATNSTLPSAEVALQA. Residues 322 to 346 are disordered; it reads TEDSTQTSDTATNSTLPSAEVALQA. The span at 323–338 shows a compositional bias: polar residues; sequence EDSTQTSDTATNSTLP.

It belongs to the G-protein coupled receptor 1 family. In terms of processing, phosphorylated; which is necessary for desensitization.

It localises to the cell membrane. In terms of biological role, high affinity receptor for N-formyl-methionyl peptides (fMLP), which are powerful neutrophil chemotactic factors. Binding of fMLP to the receptor stimulates intracellular calcium mobilization and superoxide anion release. This response is mediated via a G-protein that activates a phosphatidylinositol-calcium second messenger system. Receptor for TAFA4, mediates its effects on chemoattracting macrophages, promoting phagocytosis and increasing ROS release. Receptor for cathepsin CTSG, leading to increased phagocyte chemotaxis. The polypeptide is fMet-Leu-Phe receptor (FPR1) (Pan troglodytes (Chimpanzee)).